Consider the following 345-residue polypeptide: L-rhamnose-proton symporter (345 aa).

A run of 10 helical transmembrane segments spans residues Ala4–Ala24, Trp38–Leu58, Phe68–Ile88, Met101–Leu121, Thr131–Val151, Leu175–Ala195, Leu214–Ile234, Val259–Gly279, Ile290–Leu310, and Val323–Ala343.

It belongs to the L-rhamnose transporter (TC 2.A.7.6) family.

The protein resides in the cell inner membrane. The catalysed reaction is L-rhamnopyranose(in) + H(+)(in) = L-rhamnopyranose(out) + H(+)(out). Uptake of L-rhamnose across the cytoplasmic membrane with the concomitant transport of protons into the cell (symport system). This is L-rhamnose-proton symporter from Cronobacter sakazakii (strain ATCC BAA-894) (Enterobacter sakazakii).